Consider the following 454-residue polypeptide: Protein disulfide-isomerase TMX3 (454 aa).

The N-terminal stretch at M1–C24 is a signal peptide. Residues K25 to R128 form the Thioredoxin domain. Over K25 to P375 the chain is Lumenal. Active-site nucleophile residues include C53 and C56. C53 and C56 are oxidised to a cystine. Residues N258 and N313 are each glycosylated (N-linked (GlcNAc...) asparagine). The chain crosses the membrane as a helical span at residues L376 to I396. At Y397 to D454 the chain is on the cytoplasmic side. The disordered stretch occupies residues V412 to D454. Positions E444–D454 are enriched in basic and acidic residues. The short motif at K451–D454 is the Di-lysine motif element.

The protein belongs to the protein disulfide isomerase family.

It is found in the endoplasmic reticulum membrane. The catalysed reaction is Catalyzes the rearrangement of -S-S- bonds in proteins.. In terms of biological role, probable disulfide isomerase, which participates in the folding of proteins containing disulfide bonds. May act as a dithiol oxidase. Acts as a regulator of endoplasmic reticulum-mitochondria contact sites via its ability to regulate redox signals. The sequence is that of Protein disulfide-isomerase TMX3 (TMX3) from Pongo abelii (Sumatran orangutan).